Consider the following 191-residue polypeptide: Peptidyl-tRNA hydrolase (191 aa).

A tRNA-binding site is contributed by Y16. Catalysis depends on H21, which acts as the Proton acceptor. Residues F66, N68, and N114 each contribute to the tRNA site.

Belongs to the PTH family. In terms of assembly, monomer.

It localises to the cytoplasm. It catalyses the reaction an N-acyl-L-alpha-aminoacyl-tRNA + H2O = an N-acyl-L-amino acid + a tRNA + H(+). Its function is as follows. Hydrolyzes ribosome-free peptidyl-tRNAs (with 1 or more amino acids incorporated), which drop off the ribosome during protein synthesis, or as a result of ribosome stalling. Functionally, catalyzes the release of premature peptidyl moieties from peptidyl-tRNA molecules trapped in stalled 50S ribosomal subunits, and thus maintains levels of free tRNAs and 50S ribosomes. The chain is Peptidyl-tRNA hydrolase from Geotalea uraniireducens (strain Rf4) (Geobacter uraniireducens).